Here is a 559-residue protein sequence, read N- to C-terminus: Protein pp71 (559 aa).

C218 is modified (S-nitrosocysteine; by host). Residue T223 is modified to Phosphothreonine. 2 disordered regions span residues 404 to 440 (EFLPQSPGLPPTEEEEEEEEEDDEDDLSSTPTPTPLS) and 530 to 559 (SSTLRSVPAPRPSPISTASTSSTPRSRPRI). Over residues 415-430 (TEEEEEEEEEDDEDDL) the composition is skewed to acidic residues. 2 stretches are compositionally biased toward low complexity: residues 431–440 (SSTPTPTPLS) and 543–559 (PISTASTSSTPRSRPRI).

It belongs to the herpesviridae pp71 family. Interacts with the host protein DAXX; this interaction takes place at ND10 and induces the reversal of DAXX-mediated repression of viral transcription. Interacts with UL35. Interacts with host TMEM173/STING1; this interaction inhibits the cGAS/STING pathway. Interacts with host RB1; this interaction mediates RB1 proteasomal degradation. S-nitrosylation limits ability to undermine the cGAS/STING antiviral pathway.

It is found in the virion tegument. Its subcellular location is the host nucleus. The protein localises to the host endoplasmic reticulum. Functionally, stimulates viral immediate-early (IE) transcription. Plays a role in the inhibition of the host innate repsonse by targeting STING1 and thus the cGAS-STING pathway. Also counteracts host DAXX-mediated repression of viral transcription. Displaces a DAXX-binding protein, ATRX, from nuclear domain 10 sites (ND10) shortly after infection. Increases the basal level of SUMOylated DAXX in infected cells. Stimulates quiescent cells to re-enter the cell cycle, proceed through G1 and enter the S phase. Interacts with hypophosphorylated forms of RB1 and induces their degradation by the proteasome without involving ubiquitin conjugation. This is Protein pp71 (UL82) from Human cytomegalovirus (strain AD169) (HHV-5).